A 125-amino-acid polypeptide reads, in one-letter code: Succinate dehydrogenase cytochrome b560 subunit (125 aa).

3 helical membrane-spanning segments follow: residues 29–49, 68–88, and 104–124; these read ISGV…KLAT, ILPW…INGI, and IIKD…FKFI. Heme is bound at residue His83.

It belongs to the cytochrome b560 family. As to quaternary structure, forms part of complex II containing four subunits: a 70 kDa flavoprotein (FP), a 27 kDa iron-sulfur protein (IP), a cytochrome B and a membrane-anchoring protein. Heme serves as cofactor.

It localises to the mitochondrion inner membrane. It participates in carbohydrate metabolism; tricarboxylic acid cycle. In terms of biological role, membrane-anchoring subunit of succinate dehydrogenase (SDH) that is involved in complex II of the mitochondrial electron transport chain and is responsible for transferring electrons from succinate to ubiquinone (coenzyme Q). The sequence is that of Succinate dehydrogenase cytochrome b560 subunit (SDH3) from Porphyra purpurea (Red seaweed).